A 455-amino-acid polypeptide reads, in one-letter code: Elongation factor Tu, mitochondrial (455 aa).

A mitochondrion-targeting transit peptide spans 1–46 (MTTMAAATLLRATPHFSGLAAGRTFLLQGLLRLLKAPALPLLCRGL). The region spanning 58-254 (KPHVNVGTIG…AVDTYIPVPA (197 aa)) is the tr-type G domain. Residues 67–74 (GHVDHGKT) are G1. Residues Asp70, Gly72, Lys73, Thr74, and Thr75 each coordinate GTP. Residue Thr74 participates in Mg(2+) binding. Residue Lys82 is modified to N6-acetyllysine. Lys91 carries the post-translational modification N6-acetyllysine; alternate. Residue Lys91 is modified to N6-succinyllysine; alternate. Residues 108 to 112 (GITIN) are G2. A G3 region spans residues 129-132 (DCPG). 5 residues coordinate GTP: Asn184, Asp187, Ser222, Ala223, and Leu224. The interval 184 to 187 (NKAD) is G4. The interval 222–224 (SAL) is G5. Position 237 is an N6-succinyllysine (Lys237). Residue Lys259 is modified to N6-acetyllysine. Phosphothreonine is present on Thr281. Lys289 carries the N6-succinyllysine modification. Ser315 carries the phosphoserine modification. Residues Lys364 and Lys421 each carry the N6-acetyllysine modification.

The protein belongs to the TRAFAC class translation factor GTPase superfamily. Classic translation factor GTPase family. EF-Tu/EF-1A subfamily. Interacts with NLRX1. Interacts with ATG16L1. As to quaternary structure, (Microbial infection) Interacts with human parainfluenza virus 3 matrix protein; this interaction inhibits RLR-mediated type I interferon production while promoting autophagy. In terms of assembly, (Microbial infection) Interacts with Hantaan hantavirus glycoprotein N; this interaction contributes to the virus-induced degradation of mitochondria by autophagy, which leads to degradation of MAVS and inhibition of type I interferon (IFN) responses.

The protein localises to the mitochondrion. It carries out the reaction GTP + H2O = GDP + phosphate + H(+). In terms of biological role, GTP hydrolase that promotes the GTP-dependent binding of aminoacyl-tRNA to the A-site of ribosomes during protein biosynthesis. Also plays a role in the regulation of autophagy and innate immunity. Recruits ATG5-ATG12 and NLRX1 at mitochondria and serves as a checkpoint of the RIGI-MAVS pathway. In turn, inhibits RLR-mediated type I interferon while promoting autophagy. This is Elongation factor Tu, mitochondrial (TUFM) from Homo sapiens (Human).